A 641-amino-acid polypeptide reads, in one-letter code: Serine/threonine-protein kinase PK-1 (641 aa).

The 263-residue stretch at 18–280 (YRVDARIAVG…ARARDARARL (263 aa)) folds into the Protein kinase domain. ATP-binding positions include 24–32 (IAVGGMATV) and Lys-47. The active-site Proton acceptor is the Asp-141. Positions 317–347 (LPVNEEDEGADAAHRTSRFRSPPPLPPRGRT) are disordered. PASTA domains are found at residues 375-441 (SGQF…TLSK), 442-508 (GPRT…LTVS), 509-576 (KGAP…TLSK), and 577-641 (GPEM…IEIR). Positions 469–494 (KPGMSTREFSDSVPAGSVISTEPGKG) are disordered.

The protein belongs to the protein kinase superfamily. Ser/Thr protein kinase family. In terms of processing, autophosphorylated on threonine residue(s).

It catalyses the reaction L-seryl-[protein] + ATP = O-phospho-L-seryl-[protein] + ADP + H(+). It carries out the reaction L-threonyl-[protein] + ATP = O-phospho-L-threonyl-[protein] + ADP + H(+). This Streptomyces toyocaensis protein is Serine/threonine-protein kinase PK-1 (spk1).